Reading from the N-terminus, the 358-residue chain is MANDENKQKALAAALGQIEKQFGKGSIMRLGENRSMDVETISTGSLSLDIALGAGGLPMGRIVEIYGPESSGKTTLTLQVIAAAQREGRTCAFIDAEHALDPVYAKKLGVDIDNLLCSQPDTGEQALEICDALSRSGAVDVIIVDSVAALTPKAEIEGEIGDSHMGLAARMMSQAMRKLAGNLKNSNTLLIFINQIRMKIGVMFGNPETTTGGNALKFYASVRLDIRRTGSVKNGDEVVGSETRVKVVKNKVAAPFKQAEFQILYGEGINTLGELIDLGVKHKMVEKAGAWYSYNGDKIGQGKANATIYLKEHPETAAELNKKLRDLLLHNTGDFSSAASDYVTDYEDNTEEVNNEEF.

67–74 (GPESSGKT) serves as a coordination point for ATP.

It belongs to the RecA family.

The protein resides in the cytoplasm. Functionally, can catalyze the hydrolysis of ATP in the presence of single-stranded DNA, the ATP-dependent uptake of single-stranded DNA by duplex DNA, and the ATP-dependent hybridization of homologous single-stranded DNAs. It interacts with LexA causing its activation and leading to its autocatalytic cleavage. This chain is Protein RecA, found in Xenorhabdus nematophila (strain ATCC 19061 / DSM 3370 / CCUG 14189 / LMG 1036 / NCIMB 9965 / AN6).